The chain runs to 409 residues: Arginine biosynthesis bifunctional protein ArgJ (409 aa).

The substrate site is built by Thr156, Lys182, Thr193, Glu280, Asn404, and Ser409. Residue Thr193 is the Nucleophile of the active site.

The protein belongs to the ArgJ family. As to quaternary structure, heterotetramer of two alpha and two beta chains.

The protein resides in the cytoplasm. It catalyses the reaction N(2)-acetyl-L-ornithine + L-glutamate = N-acetyl-L-glutamate + L-ornithine. It carries out the reaction L-glutamate + acetyl-CoA = N-acetyl-L-glutamate + CoA + H(+). It participates in amino-acid biosynthesis; L-arginine biosynthesis; L-ornithine and N-acetyl-L-glutamate from L-glutamate and N(2)-acetyl-L-ornithine (cyclic): step 1/1. The protein operates within amino-acid biosynthesis; L-arginine biosynthesis; N(2)-acetyl-L-ornithine from L-glutamate: step 1/4. Functionally, catalyzes two activities which are involved in the cyclic version of arginine biosynthesis: the synthesis of N-acetylglutamate from glutamate and acetyl-CoA as the acetyl donor, and of ornithine by transacetylation between N(2)-acetylornithine and glutamate. The polypeptide is Arginine biosynthesis bifunctional protein ArgJ (Nitrosomonas europaea (strain ATCC 19718 / CIP 103999 / KCTC 2705 / NBRC 14298)).